Here is a 341-residue protein sequence, read N- to C-terminus: UDP-3-O-acylglucosamine N-acyltransferase (341 aa).

The Proton acceptor role is filled by His240.

Belongs to the transferase hexapeptide repeat family. LpxD subfamily. Homotrimer.

The catalysed reaction is a UDP-3-O-[(3R)-3-hydroxyacyl]-alpha-D-glucosamine + a (3R)-hydroxyacyl-[ACP] = a UDP-2-N,3-O-bis[(3R)-3-hydroxyacyl]-alpha-D-glucosamine + holo-[ACP] + H(+). The protein operates within bacterial outer membrane biogenesis; LPS lipid A biosynthesis. Catalyzes the N-acylation of UDP-3-O-acylglucosamine using 3-hydroxyacyl-ACP as the acyl donor. Is involved in the biosynthesis of lipid A, a phosphorylated glycolipid that anchors the lipopolysaccharide to the outer membrane of the cell. The sequence is that of UDP-3-O-acylglucosamine N-acyltransferase from Cellvibrio japonicus (strain Ueda107) (Pseudomonas fluorescens subsp. cellulosa).